The following is a 68-amino-acid chain: Conotoxin Mr3.4 (68 aa).

An N-terminal signal peptide occupies residues 1–19 (MSKLGVLLTICLLLFPLTA). Positions 20 to 49 (VPLDGDQPADRPAERMQDDISSERHPFFDR) are excised as a propeptide. 3 cysteine pairs are disulfide-bonded: cysteine 53/cysteine 67, cysteine 54/cysteine 63, and cysteine 59/cysteine 66. The residue at position 65 (proline 65) is a 4-hydroxyproline.

The protein belongs to the conotoxin M superfamily. In terms of tissue distribution, expressed by the venom duct.

It is found in the secreted. In Conus marmoreus (Marble cone), this protein is Conotoxin Mr3.4.